The sequence spans 165 residues: Lithostathine (165 aa).

Positions 1-21 (MTRNKYFILLSCLMVLSPSQG) are cleaved as a signal peptide. At Gln-22 the chain carries Pyrrolidone carboxylic acid. Residues 33–163 (ITCPEGSNAY…DAQLSFVCKF (131 aa)) enclose the C-type lectin domain. 3 disulfide bridges follow: Cys-35–Cys-46, Cys-63–Cys-161, and Cys-136–Cys-153. A glycan (N-linked (GlcNAc...) asparagine) is linked at Asn-129.

As to expression, expressed only in regenerating islets, but not in normal pancreatic islets, insulinomas or regenerating liver.

It is found in the secreted. Functionally, might act as an inhibitor of spontaneous calcium carbonate precipitation. In Rattus norvegicus (Rat), this protein is Lithostathine (Reg1).